A 631-amino-acid polypeptide reads, in one-letter code: Pescadillo homolog (631 aa).

The BRCT domain maps to 321–414 (RLRNLFKGLK…QLLPTNKYFL (94 aa)). 2 disordered regions span residues 450–469 (HAQS…EDDT) and 489–569 (EYKK…MVKP). 2 positions are modified to phosphoserine: S453 and S457. Acidic residues-rich tracts occupy residues 454–469 (DDES…EDDT) and 499–524 (VNED…EELD). Residues 510-541 (FDGEQESDEEEEELDEKTKRLQEEKKKMSVQS) are a coiled coil. The segment covering 525 to 536 (EKTKRLQEEKKK) has biased composition (basic and acidic residues). A compositionally biased stretch (basic residues) spans 543–552 (KVHKVNKRQL). Over residues 553–562 (HKAEVDEHRL) the composition is skewed to basic and acidic residues.

Belongs to the pescadillo family.

It is found in the nucleus. It localises to the nucleolus. The protein resides in the nucleoplasm. In terms of biological role, required for maturation of ribosomal RNAs and formation of the large ribosomal subunit. The chain is Pescadillo homolog from Drosophila mojavensis (Fruit fly).